A 476-amino-acid chain; its full sequence is MSSLRFLDLVKPFVPFLPEVQQPETKIPFNQKLMWTGLTLLIFLVMSQMPLYGIVSSDTSDPLYWLRMMMASNRGTLMELGITPIISSGMVFQLLAGTHMIDVNLDLKADRELYQTAQKLFAVILSIGTATVYVFTGLYGPPSDLGAGIVFLLILQLVVAGMIVILLDELLQKGYGLGSGISLFIATNICESIMWKAFSPTSINTGRGPEYEGAVIALFHLLMTWDNKQRALYEAFYRQNLPNIMNLLATLVVFAAVIYLQGFRVEIPVKSSRQRGARGSYPIRLFYTSNMPIMLQSALSSNVFLISQMLYSRFSENLLVRLFGVWEAKEGTAQLSAVSGLVYYMSPPLNFKDALLDPIHTAVYIAYMLTACAVFSKTWIEVSGSSPRDVAKQLKDQGLVMAGHREQSMYKELKRIIPTAAAFGGACIGALSVASDLMGALGSGTGTLLAVTIIYGYFEIAAKEGDLQGMKGMIMG.

Residues 1–33 lie on the Cytoplasmic side of the membrane; it reads MSSLRFLDLVKPFVPFLPEVQQPETKIPFNQKL. Residues 34–54 form a helical membrane-spanning segment; the sequence is MWTGLTLLIFLVMSQMPLYGI. Over 55 to 76 the chain is Lumenal; sequence VSSDTSDPLYWLRMMMASNRGT. The chain crosses the membrane as a helical span at residues 77-97; it reads LMELGITPIISSGMVFQLLAG. Topologically, residues 98–119 are cytoplasmic; it reads THMIDVNLDLKADRELYQTAQK. Residues 120–140 traverse the membrane as a helical segment; the sequence is LFAVILSIGTATVYVFTGLYG. At 141–146 the chain is on the lumenal side; the sequence is PPSDLG. A helical membrane pass occupies residues 147–167; sequence AGIVFLLILQLVVAGMIVILL. Topologically, residues 168–246 are cytoplasmic; that stretch reads DELLQKGYGL…YRQNLPNIMN (79 aa). The helical transmembrane segment at 247-267 threads the bilayer; it reads LLATLVVFAAVIYLQGFRVEI. The Lumenal segment spans residues 268-361; sequence PVKSSRQRGA…KDALLDPIHT (94 aa). A helical transmembrane segment spans residues 362–382; it reads AVYIAYMLTACAVFSKTWIEV. Residues 383-415 lie on the Cytoplasmic side of the membrane; sequence SGSSPRDVAKQLKDQGLVMAGHREQSMYKELKR. A helical transmembrane segment spans residues 416–434; the sequence is IIPTAAAFGGACIGALSVA. Residues 435-440 are Lumenal-facing; it reads SDLMGA. The chain crosses the membrane as a helical span at residues 441–458; it reads LGSGTGTLLAVTIIYGYF. Over 459–476 the chain is Cytoplasmic; that stretch reads EIAAKEGDLQGMKGMIMG.

The protein belongs to the SecY/SEC61-alpha family. In terms of assembly, heterotrimeric complex composed of SEC61-alpha, SEC61-beta and SEC61-gamma.

The protein localises to the endoplasmic reticulum membrane. Functionally, appears to play a crucial role in the insertion of secretory and membrane polypeptides into the ER. It is required for assembly of membrane and secretory proteins and is essential for cell growth. It interacts with other membrane proteins required for protein translocation. Upon binding to SEC62/63 complex, secretory precursor polypeptides may engage SEC61 to begin membrane penetration event. A cycle of assembly and disassembly of SEC62/63 from SEC61 may govern the activity of the translocase. The sequence is that of Protein transport protein SEC61 subunit alpha (sec-61) from Neurospora crassa (strain ATCC 24698 / 74-OR23-1A / CBS 708.71 / DSM 1257 / FGSC 987).